A 553-amino-acid polypeptide reads, in one-letter code: Putative transport protein YidE (553 aa).

5 helical membrane-spanning segments follow: residues 4 to 24, 28 to 48, 65 to 85, 95 to 115, and 158 to 178; these read IALT…IGNI, GVGF…HFVD, FGLI…FFAS, LFAV…HKIF, and MSYA…MWLM. 2 RCK C-terminal domains span residues 192–276 and 279–361; these read KHES…VIGK and DTSL…VVGN. The next 6 helical transmembrane spans lie at 371–391, 393–413, 437–457, 464–484, 493–513, and 533–553; these read MLPV…PLFV, GFPV…ALIL, LGIV…FVDT, LSWI…VGLL, YLTL…LAFA, and LVMF…WGMG.

Belongs to the AAE transporter (TC 2.A.81) family. YidE subfamily.

It is found in the cell membrane. In Salmonella heidelberg (strain SL476), this protein is Putative transport protein YidE.